We begin with the raw amino-acid sequence, 317 residues long: uncharacterized protein (317 aa).

This sequence to A.aeolicus AA11 and AA34.

This is an uncharacterized protein from Aquifex aeolicus (strain VF5).